A 564-amino-acid polypeptide reads, in one-letter code: Formate--tetrahydrofolate ligase (564 aa).

65 to 72 (TPLGEGKT) contributes to the ATP binding site.

The protein belongs to the formate--tetrahydrofolate ligase family.

It carries out the reaction (6S)-5,6,7,8-tetrahydrofolate + formate + ATP = (6R)-10-formyltetrahydrofolate + ADP + phosphate. Its pathway is one-carbon metabolism; tetrahydrofolate interconversion. The sequence is that of Formate--tetrahydrofolate ligase from Roseiflexus sp. (strain RS-1).